The chain runs to 137 residues: Diacylglycerol kinase (137 aa).

Residue E42 coordinates a divalent metal cation. 2 consecutive transmembrane segments (helical) span residues 49 to 67 and 73 to 89; these read LIAFAAAMIAFIIVGATFF and AILFLLMMAFEAINTAI. E83 (proton acceptor) is an active-site residue. E90 is an a divalent metal cation binding site. The chain crosses the membrane as a helical span at residues 112–132; the sequence is SFACLCLIVANGVYAAYVVIF.

This sequence belongs to the bacterial diacylglycerol kinase family. The cofactor is Mg(2+).

The protein resides in the cell inner membrane. The catalysed reaction is a 1,2-diacyl-sn-glycerol + ATP = a 1,2-diacyl-sn-glycero-3-phosphate + ADP + H(+). Catalyzes the ATP-dependent phosphorylation of sn-l,2-diacylglycerol (DAG) to phosphatidic acid. Involved in the recycling of diacylglycerol produced as a by-product during membrane-derived oligosaccharide (MDO) biosynthesis. In Sinorhizobium sp, this protein is Diacylglycerol kinase (dgkA).